Consider the following 65-residue polypeptide: MPKMKTRRGAAKRFAKTGSGKFKRRKQGLRHILTKKTAKRKSRLGQSATVDSANIGQVKRMLPYA.

Positions 1-43 (MPKMKTRRGAAKRFAKTGSGKFKRRKQGLRHILTKKTAKRKSR) are enriched in basic residues. A disordered region spans residues 1–49 (MPKMKTRRGAAKRFAKTGSGKFKRRKQGLRHILTKKTAKRKSRLGQSAT).

The protein belongs to the bacterial ribosomal protein bL35 family.

The chain is Large ribosomal subunit protein bL35 from Maridesulfovibrio salexigens (strain ATCC 14822 / DSM 2638 / NCIMB 8403 / VKM B-1763) (Desulfovibrio salexigens).